Consider the following 384-residue polypeptide: 8-amino-7-oxononanoate synthase (384 aa).

Arg21 is a substrate binding site. 108–109 is a binding site for pyridoxal 5'-phosphate; that stretch reads GF. His133 contributes to the substrate binding site. Ser179, His207, and Thr233 together coordinate pyridoxal 5'-phosphate. Lys236 is subject to N6-(pyridoxal phosphate)lysine. Thr352 is a substrate binding site.

It belongs to the class-II pyridoxal-phosphate-dependent aminotransferase family. BioF subfamily. Homodimer. Requires pyridoxal 5'-phosphate as cofactor.

It carries out the reaction 6-carboxyhexanoyl-[ACP] + L-alanine + H(+) = (8S)-8-amino-7-oxononanoate + holo-[ACP] + CO2. It participates in cofactor biosynthesis; biotin biosynthesis. Its function is as follows. Catalyzes the decarboxylative condensation of pimeloyl-[acyl-carrier protein] and L-alanine to produce 8-amino-7-oxononanoate (AON), [acyl-carrier protein], and carbon dioxide. The chain is 8-amino-7-oxononanoate synthase from Escherichia coli O6:K15:H31 (strain 536 / UPEC).